Reading from the N-terminus, the 124-residue chain is Small ribosomal subunit protein uS13 (124 aa).

Residues 98-124 form a disordered region; the sequence is VRGQRTKTNARTRKGPKRTIAGKKKAR.

This sequence belongs to the universal ribosomal protein uS13 family. As to quaternary structure, part of the 30S ribosomal subunit. Forms a loose heterodimer with protein S19. Forms two bridges to the 50S subunit in the 70S ribosome.

Its function is as follows. Located at the top of the head of the 30S subunit, it contacts several helices of the 16S rRNA. In the 70S ribosome it contacts the 23S rRNA (bridge B1a) and protein L5 of the 50S subunit (bridge B1b), connecting the 2 subunits; these bridges are implicated in subunit movement. Contacts the tRNAs in the A and P-sites. The polypeptide is Small ribosomal subunit protein uS13 (Mycobacterium leprae (strain Br4923)).